The following is a 328-amino-acid chain: Malate dehydrogenase (328 aa).

13-19 (GAAGQIS) serves as a coordination point for NAD(+). 2 residues coordinate substrate: R94 and R100. NAD(+)-binding positions include N107, Q114, and 131 to 133 (VGN). Residues N133 and R164 each contribute to the substrate site. The active-site Proton acceptor is H189.

The protein belongs to the LDH/MDH superfamily. MDH type 2 family.

It carries out the reaction (S)-malate + NAD(+) = oxaloacetate + NADH + H(+). Functionally, catalyzes the reversible oxidation of malate to oxaloacetate. This Alcanivorax borkumensis (strain ATCC 700651 / DSM 11573 / NCIMB 13689 / SK2) protein is Malate dehydrogenase.